The following is a 294-amino-acid chain: NAD kinase (294 aa).

The active-site Proton acceptor is aspartate 74. NAD(+) is bound by residues 74-75 (DG), 148-149 (NE), histidine 159, arginine 176, aspartate 178, 189-194 (TAYSLS), and glutamine 249.

Belongs to the NAD kinase family. A divalent metal cation serves as cofactor.

It localises to the cytoplasm. It catalyses the reaction NAD(+) + ATP = ADP + NADP(+) + H(+). Functionally, involved in the regulation of the intracellular balance of NAD and NADP, and is a key enzyme in the biosynthesis of NADP. Catalyzes specifically the phosphorylation on 2'-hydroxyl of the adenosine moiety of NAD to yield NADP. The chain is NAD kinase from Vibrio vulnificus (strain YJ016).